The primary structure comprises 641 residues: Acetyl-coenzyme A synthetase (641 aa).

CoA-binding positions include 186 to 189 (RGGK) and Thr304. Residues 380-382 (GEP), 404-409 (DTWWQT), Asp493, and Arg508 contribute to the ATP site. Ser516 contributes to the CoA binding site. ATP is bound at residue Arg519. Mg(2+) contacts are provided by Val530, His532, and Ile535. Lys602 is subject to N6-acetyllysine.

It belongs to the ATP-dependent AMP-binding enzyme family. Mg(2+) is required as a cofactor. Acetylated. Deacetylation by the SIR2-homolog deacetylase activates the enzyme.

It catalyses the reaction acetate + ATP + CoA = acetyl-CoA + AMP + diphosphate. Its function is as follows. Catalyzes the conversion of acetate into acetyl-CoA (AcCoA), an essential intermediate at the junction of anabolic and catabolic pathways. AcsA undergoes a two-step reaction. In the first half reaction, AcsA combines acetate with ATP to form acetyl-adenylate (AcAMP) intermediate. In the second half reaction, it can then transfer the acetyl group from AcAMP to the sulfhydryl group of CoA, forming the product AcCoA. The chain is Acetyl-coenzyme A synthetase from Gamma-proteobacterium EBAC31A08.